The primary structure comprises 182 residues: Troponin I, fast skeletal muscle (182 aa).

Gly2 is subject to N-acetylglycine. Residues 2–48 (GDEEKRNRAITARRQHLKSVMLQIAATELEKEEGRREAEKQNYLAEH) are involved in binding TNC. At Thr12 the chain carries Phosphothreonine; by PHK. Positions 97-117 (NQKLFDLRGKFKRPPLRRVRM) are involved in binding TNC and actin. At Ser118 the chain carries Phosphoserine; by PKA.

This sequence belongs to the troponin I family. As to quaternary structure, binds to actin and tropomyosin.

Functionally, troponin I is the inhibitory subunit of troponin, the thin filament regulatory complex which confers calcium-sensitivity to striated muscle actomyosin ATPase activity. The polypeptide is Troponin I, fast skeletal muscle (TNNI2) (Oryctolagus cuniculus (Rabbit)).